The following is a 372-amino-acid chain: N-methyl-L-tryptophan oxidase (372 aa).

Residue 4-34 (DLIIIGSGSVGAAAGYYATRAGLNVLMTDAH) coordinates FAD. Residue Cys308 is modified to S-8alpha-FAD cysteine.

It belongs to the MSOX/MTOX family. MTOX subfamily. In terms of assembly, monomer. FAD is required as a cofactor.

It carries out the reaction N(alpha)-methyl-L-tryptophan + O2 + H2O = L-tryptophan + formaldehyde + H2O2. Catalyzes the oxidative demethylation of N-methyl-L-tryptophan. The protein is N-methyl-L-tryptophan oxidase of Shigella flexneri serotype 5b (strain 8401).